Consider the following 966-residue polypeptide: Valine--tRNA ligase (966 aa).

The 'HIGH' region signature appears at 48–58 (PNITGGLHLGH). Positions 348 to 368 (DYKDARKKIIEECKRLKILED) form a coiled coil. Residues 566–570 (KMSKS) carry the 'KMSKS' region motif. ATP is bound at residue K569. The stretch at 939-960 (FKKSQEKLNHYNKTKNKLLNQY) forms a coiled coil.

Belongs to the class-I aminoacyl-tRNA synthetase family. ValS type 1 subfamily. In terms of assembly, monomer.

The protein resides in the cytoplasm. The enzyme catalyses tRNA(Val) + L-valine + ATP = L-valyl-tRNA(Val) + AMP + diphosphate. In terms of biological role, catalyzes the attachment of valine to tRNA(Val). As ValRS can inadvertently accommodate and process structurally similar amino acids such as threonine, to avoid such errors, it has a 'posttransfer' editing activity that hydrolyzes mischarged Thr-tRNA(Val) in a tRNA-dependent manner. The protein is Valine--tRNA ligase of Blochmanniella floridana.